The chain runs to 121 residues: Small ribosomal subunit protein uS13 (121 aa).

The disordered stretch occupies residues 93-121 (RGLPVRGQNTKNNARTRKGPRRTVANKKK). Residues 106–121 (ARTRKGPRRTVANKKK) are compositionally biased toward basic residues.

It belongs to the universal ribosomal protein uS13 family. As to quaternary structure, part of the 30S ribosomal subunit. Forms a loose heterodimer with protein S19. Forms two bridges to the 50S subunit in the 70S ribosome.

Located at the top of the head of the 30S subunit, it contacts several helices of the 16S rRNA. In the 70S ribosome it contacts the 23S rRNA (bridge B1a) and protein L5 of the 50S subunit (bridge B1b), connecting the 2 subunits; these bridges are implicated in subunit movement. Contacts the tRNAs in the A and P-sites. The polypeptide is Small ribosomal subunit protein uS13 (Bacillus pumilus (strain SAFR-032)).